The chain runs to 391 residues: Phosphoglycerate kinase (391 aa).

Residues 21–23 (DLN), arginine 36, 59–62 (HLGR), arginine 113, and arginine 146 each bind substrate. Residues lysine 197, glutamate 319, and 345 to 348 (GGDT) each bind ATP.

Belongs to the phosphoglycerate kinase family. In terms of assembly, monomer.

Its subcellular location is the cytoplasm. It carries out the reaction (2R)-3-phosphoglycerate + ATP = (2R)-3-phospho-glyceroyl phosphate + ADP. Its pathway is carbohydrate degradation; glycolysis; pyruvate from D-glyceraldehyde 3-phosphate: step 2/5. This is Phosphoglycerate kinase from Stenotrophomonas maltophilia (strain K279a).